The sequence spans 75 residues: Small ribosomal subunit protein bS18 (75 aa).

This sequence belongs to the bacterial ribosomal protein bS18 family. In terms of assembly, part of the 30S ribosomal subunit. Forms a tight heterodimer with protein bS6.

Binds as a heterodimer with protein bS6 to the central domain of the 16S rRNA, where it helps stabilize the platform of the 30S subunit. This is Small ribosomal subunit protein bS18 from Baumannia cicadellinicola subsp. Homalodisca coagulata.